Consider the following 445-residue polypeptide: NADH-quinone oxidoreductase subunit F (445 aa).

Residue glycine 61–glycine 70 coordinates NAD(+). Glycine 174 to threonine 221 is a binding site for FMN. Residues cysteine 351, cysteine 354, cysteine 357, and cysteine 398 each contribute to the [4Fe-4S] cluster site.

This sequence belongs to the complex I 51 kDa subunit family. As to quaternary structure, composed of 13 different subunits. Subunits NuoCD, E, F, and G constitute the peripheral sector of the complex. Requires FMN as cofactor. It depends on [4Fe-4S] cluster as a cofactor.

The catalysed reaction is a quinone + NADH + 5 H(+)(in) = a quinol + NAD(+) + 4 H(+)(out). Its function is as follows. NDH-1 shuttles electrons from NADH, via FMN and iron-sulfur (Fe-S) centers, to quinones in the respiratory chain. The immediate electron acceptor for the enzyme in this species is believed to be ubiquinone. Couples the redox reaction to proton translocation (for every two electrons transferred, four hydrogen ions are translocated across the cytoplasmic membrane), and thus conserves the redox energy in a proton gradient. In Escherichia coli (strain K12), this protein is NADH-quinone oxidoreductase subunit F (nuoF).